Reading from the N-terminus, the 576-residue chain is K(+)/H(+) antiporter NhaP2 (576 aa).

13 consecutive transmembrane segments (helical) span residues 6–26 (INSF…LSPM), 34–54 (ILLI…GGIL), 58–78 (YSTA…DGGM), 87–107 (VALW…TSIT), 109–129 (MMAA…GAIV), 163–183 (PMAV…DTEM), 185–205 (FSFM…LGLG), 219–239 (LADG…YAAS), 242–262 (LGGS…NKPT), 271–291 (VLDG…GLLL), 299–319 (ILIP…PVAV), 335–355 (WFIS…VFPM), and 359–379 (LPGA…SLLV). The RCK C-terminal domain maps to 405-486 (SGVEIYPSSE…LEALSNLFSQ (82 aa)).

The protein belongs to the monovalent cation:proton antiporter 1 (CPA1) transporter (TC 2.A.36) family. NhaP2 subfamily.

It localises to the cell inner membrane. The enzyme catalyses K(+)(in) + H(+)(out) = K(+)(out) + H(+)(in). K(+)/H(+) antiporter that extrudes potassium in exchange for external protons and maintains the internal concentration of potassium under toxic levels. The chain is K(+)/H(+) antiporter NhaP2 from Shewanella baltica (strain OS195).